The primary structure comprises 253 residues: Ubiquinone biosynthesis O-methyltransferase (253 aa).

S-adenosyl-L-methionine is bound by residues Arg41, Gly72, Asp93, and Leu136.

The protein belongs to the methyltransferase superfamily. UbiG/COQ3 family.

The enzyme catalyses a 3-demethylubiquinol + S-adenosyl-L-methionine = a ubiquinol + S-adenosyl-L-homocysteine + H(+). It carries out the reaction a 3-(all-trans-polyprenyl)benzene-1,2-diol + S-adenosyl-L-methionine = a 2-methoxy-6-(all-trans-polyprenyl)phenol + S-adenosyl-L-homocysteine + H(+). Its pathway is cofactor biosynthesis; ubiquinone biosynthesis. Its function is as follows. O-methyltransferase that catalyzes the 2 O-methylation steps in the ubiquinone biosynthetic pathway. This is Ubiquinone biosynthesis O-methyltransferase from Azorhizobium caulinodans (strain ATCC 43989 / DSM 5975 / JCM 20966 / LMG 6465 / NBRC 14845 / NCIMB 13405 / ORS 571).